The following is a 93-amino-acid chain: Small ribosomal subunit protein uS19 (93 aa).

This sequence belongs to the universal ribosomal protein uS19 family.

Protein S19 forms a complex with S13 that binds strongly to the 16S ribosomal RNA. This Saccharopolyspora erythraea (strain ATCC 11635 / DSM 40517 / JCM 4748 / NBRC 13426 / NCIMB 8594 / NRRL 2338) protein is Small ribosomal subunit protein uS19.